The following is a 317-amino-acid chain: Beta-ketoacyl-[acyl-carrier-protein] synthase III (317 aa).

Active-site residues include Cys-112 and His-244. The tract at residues 245-249 (QANLR) is ACP-binding. Asn-274 is an active-site residue.

Belongs to the thiolase-like superfamily. FabH family. In terms of assembly, homodimer.

The protein localises to the cytoplasm. The catalysed reaction is malonyl-[ACP] + acetyl-CoA + H(+) = 3-oxobutanoyl-[ACP] + CO2 + CoA. The protein operates within lipid metabolism; fatty acid biosynthesis. In terms of biological role, catalyzes the condensation reaction of fatty acid synthesis by the addition to an acyl acceptor of two carbons from malonyl-ACP. Catalyzes the first condensation reaction which initiates fatty acid synthesis and may therefore play a role in governing the total rate of fatty acid production. Possesses both acetoacetyl-ACP synthase and acetyl transacylase activities. Its substrate specificity determines the biosynthesis of branched-chain and/or straight-chain of fatty acids. The protein is Beta-ketoacyl-[acyl-carrier-protein] synthase III of Pectobacterium atrosepticum (strain SCRI 1043 / ATCC BAA-672) (Erwinia carotovora subsp. atroseptica).